The primary structure comprises 65 residues: Large ribosomal subunit protein uL30 (65 aa).

The protein belongs to the universal ribosomal protein uL30 family. In terms of assembly, part of the 50S ribosomal subunit.

The polypeptide is Large ribosomal subunit protein uL30 (Aster yellows witches'-broom phytoplasma (strain AYWB)).